The primary structure comprises 276 residues: Putative respiratory nitrate reductase heme subunit ORF7 (276 aa).

Residues Met-138 and Lys-228 each coordinate heme b.

In terms of assembly, probable multiprotein complex; a catalytic heterodimer of an alpha and beta chain is proposed to associate with additional subunits involved in membrane attachment and electron transfer. Requires heme b as cofactor.

Its subcellular location is the cell membrane. The respiratory membrane-bound nitrate reductase enzyme complex plays a role in generation of metabolic energy by using nitrate as a terminal electron acceptor during anaerobic conditions. May transfer electrons to the iron-sulfur centers of the catalytic beta subunit. The polypeptide is Putative respiratory nitrate reductase heme subunit ORF7 (Haloferax mediterranei (strain ATCC 33500 / DSM 1411 / JCM 8866 / NBRC 14739 / NCIMB 2177 / R-4) (Halobacterium mediterranei)).